The sequence spans 399 residues: Succinate--CoA ligase [ADP-forming] subunit beta (399 aa).

The ATP-grasp domain maps to 9–254 (KAVLAEFGAP…ESEEDPKEIE (246 aa)). ATP-binding positions include Lys-46, 53-55 (GRG), Glu-109, Ala-112, and Glu-117. Residues Asn-209 and Asp-223 each contribute to the Mg(2+) site. Substrate contacts are provided by residues Asn-274 and 331-333 (GIM).

This sequence belongs to the succinate/malate CoA ligase beta subunit family. Heterotetramer of two alpha and two beta subunits. The cofactor is Mg(2+).

The catalysed reaction is succinate + ATP + CoA = succinyl-CoA + ADP + phosphate. The enzyme catalyses GTP + succinate + CoA = succinyl-CoA + GDP + phosphate. It participates in carbohydrate metabolism; tricarboxylic acid cycle; succinate from succinyl-CoA (ligase route): step 1/1. In terms of biological role, succinyl-CoA synthetase functions in the citric acid cycle (TCA), coupling the hydrolysis of succinyl-CoA to the synthesis of either ATP or GTP and thus represents the only step of substrate-level phosphorylation in the TCA. The beta subunit provides nucleotide specificity of the enzyme and binds the substrate succinate, while the binding sites for coenzyme A and phosphate are found in the alpha subunit. This is Succinate--CoA ligase [ADP-forming] subunit beta from Caulobacter sp. (strain K31).